The chain runs to 50 residues: Protein PsbN (50 aa).

Residues 14–34 form a helical membrane-spanning segment; it reads VAVTILAVLLALTGFGLWTAF.

The protein belongs to the PsbN family.

It is found in the cellular thylakoid membrane. Its function is as follows. May play a role in photosystem I and II biogenesis. In Prochlorococcus marinus subsp. pastoris (strain CCMP1986 / NIES-2087 / MED4), this protein is Protein PsbN.